The sequence spans 225 residues: Orotate phosphoribosyltransferase (225 aa).

Lys31 serves as a coordination point for 5-phospho-alpha-D-ribose 1-diphosphate. 39 to 40 (FF) serves as a coordination point for orotate. 5-phospho-alpha-D-ribose 1-diphosphate is bound by residues 78 to 79 (YK), Arg105, Lys106, Lys109, His111, and 130 to 138 (DDVLTSGKA). Thr134 and Arg163 together coordinate orotate.

This sequence belongs to the purine/pyrimidine phosphoribosyltransferase family. PyrE subfamily. As to quaternary structure, homodimer.

It catalyses the reaction orotidine 5'-phosphate + diphosphate = orotate + 5-phospho-alpha-D-ribose 1-diphosphate. It functions in the pathway pyrimidine metabolism; UMP biosynthesis via de novo pathway; UMP from orotate: step 1/2. Functionally, catalyzes the transfer of a ribosyl phosphate group from 5-phosphoribose 1-diphosphate to orotate, leading to the formation of orotidine monophosphate (OMP). The sequence is that of Orotate phosphoribosyltransferase (URA5) from Cryptococcus neoformans var. grubii serotype A (strain H99 / ATCC 208821 / CBS 10515 / FGSC 9487) (Filobasidiella neoformans var. grubii).